Reading from the N-terminus, the 212-residue chain is Thymidylate kinase (212 aa).

Residue 10-17 (GPDGAGKT) coordinates ATP.

This sequence belongs to the thymidylate kinase family.

It catalyses the reaction dTMP + ATP = dTDP + ADP. Functionally, phosphorylation of dTMP to form dTDP in both de novo and salvage pathways of dTTP synthesis. The polypeptide is Thymidylate kinase (Lactobacillus delbrueckii subsp. bulgaricus (strain ATCC 11842 / DSM 20081 / BCRC 10696 / JCM 1002 / NBRC 13953 / NCIMB 11778 / NCTC 12712 / WDCM 00102 / Lb 14)).